The chain runs to 460 residues: A-type ATP synthase subunit B (460 aa).

The protein belongs to the ATPase alpha/beta chains family. Has multiple subunits with at least A(3), B(3), C, D, E, F, H, I and proteolipid K(x).

It localises to the cell membrane. In terms of biological role, component of the A-type ATP synthase that produces ATP from ADP in the presence of a proton gradient across the membrane. The B chain is a regulatory subunit. In Methanosarcina acetivorans (strain ATCC 35395 / DSM 2834 / JCM 12185 / C2A), this protein is A-type ATP synthase subunit B.